Reading from the N-terminus, the 422-residue chain is UDP-N-acetylglucosamine 1-carboxyvinyltransferase (422 aa).

Position 23-24 (23-24 (KN)) interacts with phosphoenolpyruvate. Arg-92 is a binding site for UDP-N-acetyl-alpha-D-glucosamine. Cys-116 (proton donor) is an active-site residue. Cys-116 bears the 2-(S-cysteinyl)pyruvic acid O-phosphothioketal mark. UDP-N-acetyl-alpha-D-glucosamine-binding positions include 121 to 125 (RPVDL), 161 to 165 (KVSVG), Asp-306, and Ile-328.

Belongs to the EPSP synthase family. MurA subfamily.

It is found in the cytoplasm. It catalyses the reaction phosphoenolpyruvate + UDP-N-acetyl-alpha-D-glucosamine = UDP-N-acetyl-3-O-(1-carboxyvinyl)-alpha-D-glucosamine + phosphate. It participates in cell wall biogenesis; peptidoglycan biosynthesis. Functionally, cell wall formation. Adds enolpyruvyl to UDP-N-acetylglucosamine. This chain is UDP-N-acetylglucosamine 1-carboxyvinyltransferase, found in Aliivibrio fischeri (strain MJ11) (Vibrio fischeri).